Here is a 556-residue protein sequence, read N- to C-terminus: 2,3-bisphosphoglycerate-independent phosphoglycerate mutase (556 aa).

Mn(2+)-binding residues include D25 and S78. S78 (phosphoserine intermediate) is an active-site residue. Residues H137, 167-168, R203, R210, 283-286, and K358 each bind substrate; these read RD and RADR. Mn(2+) contacts are provided by D427, H431, D468, H469, and H498.

Belongs to the BPG-independent phosphoglycerate mutase family. Monomer. The cofactor is Mn(2+). In terms of tissue distribution, found ubiquitously in germinating seed.

It is found in the cytoplasm. The catalysed reaction is (2R)-2-phosphoglycerate = (2R)-3-phosphoglycerate. It functions in the pathway carbohydrate degradation; glycolysis; pyruvate from D-glyceraldehyde 3-phosphate: step 3/5. Functionally, catalyzes the interconversion of 2-phosphoglycerate and 3-phosphoglycerate. This is 2,3-bisphosphoglycerate-independent phosphoglycerate mutase from Ricinus communis (Castor bean).